The following is a 347-amino-acid chain: MSGLLCYCRQGFEPELAAELSARAAFVGIAGYARTQRNDGYVLFVCDEAAQLAAKLQWRELIFARQKLVVIAELKGIDPKDRITPILAALEGQQRFGDLWVEHPDSDAGKPLAGLARSFGNALRPALRKAGLLTDKPQPRQPRLHICFLDGDHALLAVADSADSAPWPLGIPRLKLLPEAPSRSALKLDEALLTLLTPEEREALVKPGMRAADLGAAPGGWTWVLTRQHVHVTSVDNGPLRAHVLETGLVEHLRADGFHWKPAQPLDWMVCDMVEQPRRVAERMATWVREGWCRNTIFNLKLPMKKRWDETRLCLELFEQQAEKSLIVRAKQLYHDREEITVLAMRG.

Residues Ser184, 217–220, Asp236, Asp256, and Asp272 contribute to the S-adenosyl-L-methionine site; that span reads APGG. The Proton acceptor role is filled by Lys301.

Belongs to the class I-like SAM-binding methyltransferase superfamily. RNA methyltransferase RlmE family. RlmM subfamily. In terms of assembly, monomer.

It is found in the cytoplasm. The enzyme catalyses cytidine(2498) in 23S rRNA + S-adenosyl-L-methionine = 2'-O-methylcytidine(2498) in 23S rRNA + S-adenosyl-L-homocysteine + H(+). Its function is as follows. Catalyzes the 2'-O-methylation at nucleotide C2498 in 23S rRNA. This Xanthomonas oryzae pv. oryzae (strain KACC10331 / KXO85) protein is Ribosomal RNA large subunit methyltransferase M.